A 425-amino-acid polypeptide reads, in one-letter code: Serine--tRNA ligase (425 aa).

231 to 233 serves as a coordination point for L-serine; the sequence is TAE. ATP is bound at residue 262-264; the sequence is RSE. Glu-285 provides a ligand contact to L-serine. 349 to 352 lines the ATP pocket; the sequence is EISS. Ser-385 is an L-serine binding site.

The protein belongs to the class-II aminoacyl-tRNA synthetase family. Type-1 seryl-tRNA synthetase subfamily. In terms of assembly, homodimer. The tRNA molecule binds across the dimer.

It is found in the cytoplasm. It carries out the reaction tRNA(Ser) + L-serine + ATP = L-seryl-tRNA(Ser) + AMP + diphosphate + H(+). It catalyses the reaction tRNA(Sec) + L-serine + ATP = L-seryl-tRNA(Sec) + AMP + diphosphate + H(+). The protein operates within aminoacyl-tRNA biosynthesis; selenocysteinyl-tRNA(Sec) biosynthesis; L-seryl-tRNA(Sec) from L-serine and tRNA(Sec): step 1/1. Catalyzes the attachment of serine to tRNA(Ser). Is also able to aminoacylate tRNA(Sec) with serine, to form the misacylated tRNA L-seryl-tRNA(Sec), which will be further converted into selenocysteinyl-tRNA(Sec). This chain is Serine--tRNA ligase, found in Bartonella tribocorum (strain CIP 105476 / IBS 506).